An 858-amino-acid chain; its full sequence is DNA mismatch repair protein MutS (858 aa).

613–620 (GPNMAGKS) is a binding site for ATP.

This sequence belongs to the DNA mismatch repair MutS family.

Its function is as follows. This protein is involved in the repair of mismatches in DNA. It is possible that it carries out the mismatch recognition step. This protein has a weak ATPase activity. The chain is DNA mismatch repair protein MutS from Dehalococcoides mccartyi (strain CBDB1).